A 100-amino-acid chain; its full sequence is Aspartyl/glutamyl-tRNA(Asn/Gln) amidotransferase subunit C (100 aa).

The protein belongs to the GatC family. As to quaternary structure, heterotrimer of A, B and C subunits.

It carries out the reaction L-glutamyl-tRNA(Gln) + L-glutamine + ATP + H2O = L-glutaminyl-tRNA(Gln) + L-glutamate + ADP + phosphate + H(+). It catalyses the reaction L-aspartyl-tRNA(Asn) + L-glutamine + ATP + H2O = L-asparaginyl-tRNA(Asn) + L-glutamate + ADP + phosphate + 2 H(+). Functionally, allows the formation of correctly charged Asn-tRNA(Asn) or Gln-tRNA(Gln) through the transamidation of misacylated Asp-tRNA(Asn) or Glu-tRNA(Gln) in organisms which lack either or both of asparaginyl-tRNA or glutaminyl-tRNA synthetases. The reaction takes place in the presence of glutamine and ATP through an activated phospho-Asp-tRNA(Asn) or phospho-Glu-tRNA(Gln). This Staphylococcus epidermidis (strain ATCC 35984 / DSM 28319 / BCRC 17069 / CCUG 31568 / BM 3577 / RP62A) protein is Aspartyl/glutamyl-tRNA(Asn/Gln) amidotransferase subunit C.